A 74-amino-acid chain; its full sequence is Dermaseptin-B3 (74 aa).

A signal peptide spans 1-22; it reads MAFLKKSVFLVLFLGLVSLSIC. A propeptide spanning residues 23-43 is cleaved from the precursor; it reads EEEKREEENEEKQEDDEQSEE.

Expressed by the skin glands.

The protein resides in the secreted. Functionally, possesses a potent antimicrobial activity against Gram-positive and Gram-negative bacteria. Probably acts by disturbing membrane functions with its amphipathic structure. The chain is Dermaseptin-B3 from Phyllomedusa bicolor (Two-colored leaf frog).